The following is a 561-amino-acid chain: uncharacterized protein (561 aa).

6 helical membrane-spanning segments follow: residues 10–29 (LLRNNPEIALFLAIAIGYWI), 34–56 (FGSLQIGGVAGSLLAAVLISQIG), 63–80 (LKTVLFALFIYAVGFQSG), 95–117 (VLMAFVLAISGLFTVLAVARMFH), 122–144 (LAAGVAAGGLTQSAIIGTASSAL), and 164–186 (GYAVTYIFGSLAPIIICVNILPW). 2 consecutive RCK C-terminal domains span residues 205–287 (QGMA…LLGE) and 294–376 (HDMD…ELGS). 5 helical membrane passes run 386 to 403 (LVFHGVGLVVGLLIGLIV), 407 to 429 (GSIPLTLGSGGGALLSGLLFGWY), 442 to 464 (AASTLLVDFGLSGFVAVTGLQTG), 479 to 501 (FMLGVVVSIVPLIITMLFGRYVL), and 538 to 560 (SFAITYAIANVLLTLLGPLVVAF).

The protein belongs to the AAE transporter (TC 2.A.81) family.

It localises to the cell membrane. This is an uncharacterized protein from Zymomonas mobilis subsp. mobilis (strain ATCC 31821 / ZM4 / CP4).